Reading from the N-terminus, the 2120-residue chain is Separin (2120 aa).

Position 1126 is a phosphoserine (Ser-1126). The interval 1299-1355 (IKSVPGSEPSKTQGQKRSGRGRQKLASAPLRLNNTSQKGLEGRGLPCTPKPPDRIRQ) is disordered. Residues Ser-1396 and Ser-1399 each carry the phosphoserine modification. Disordered stretches follow at residues 1412–1485 (AEEP…PEIM) and 1507–1561 (GSDG…PRLR). 2 stretches are compositionally biased toward basic residues: residues 1418–1432 (RGTA…RKGL) and 1454–1463 (RSRRAKKVAS). The segment covering 1464 to 1473 (RHCEERRPQR) has biased composition (basic and acidic residues). A Phosphoserine modification is found at Ser-1508. The span at 1548–1558 (PDKESDKDLGP) shows a compositional bias: basic and acidic residues. The region spanning 1945 to 2040 (PRSTFYVLNP…SAALAVRGNL (96 aa)) is the Peptidase C50 domain. Cys-2029 is an active-site residue.

In terms of assembly, interacts with PTTG1. Interacts with RAD21. Post-translationally, autocleaves. This function, which is not essential for its protease activity, is unknown. In terms of processing, phosphorylated by CDK1. There are 8 Ser/Thr phosphorylation sites. Among them, Ser-1126 phosphorylation is the major site, which conducts to the enzyme inactivation.

It is found in the cytoplasm. Its subcellular location is the nucleus. The catalysed reaction is All bonds known to be hydrolyzed by this endopeptidase have arginine in P1 and an acidic residue in P4. P6 is often occupied by an acidic residue or by a hydroxy-amino-acid residue, the phosphorylation of which enhances cleavage.. Its activity is regulated as follows. Regulated by at least two independent mechanisms. First, it is inactivated via its interaction with securin/PTTG1, which probably covers its active site. The association with PTTG1 is not only inhibitory, since PTTG1 is also required for activating it, the enzyme being inactive in cells in which PTTG1 is absent. PTTG1 degradation at anaphase, liberates it and triggers RAD21 cleavage. Second, phosphorylation at Ser-1126 inactivates it. The complete phosphorylation during mitosis, is removed when cells undergo anaphase. Activation of the enzyme at the metaphase-anaphase transition probably requires the removal of both securin and inhibitory phosphate. Functionally, caspase-like protease, which plays a central role in the chromosome segregation by cleaving the SCC1/RAD21 subunit of the cohesin complex at the onset of anaphase. During most of the cell cycle, it is inactivated by different mechanisms. In Homo sapiens (Human), this protein is Separin (ESPL1).